Consider the following 469-residue polypeptide: ATP-dependent protease ATPase subunit HslU (469 aa).

ATP-binding positions include I24, 66-71 (GVGKTE), D282, E347, and R419.

This sequence belongs to the ClpX chaperone family. HslU subfamily. A double ring-shaped homohexamer of HslV is capped on each side by a ring-shaped HslU homohexamer. The assembly of the HslU/HslV complex is dependent on binding of ATP.

The protein localises to the cytoplasm. ATPase subunit of a proteasome-like degradation complex; this subunit has chaperone activity. The binding of ATP and its subsequent hydrolysis by HslU are essential for unfolding of protein substrates subsequently hydrolyzed by HslV. HslU recognizes the N-terminal part of its protein substrates and unfolds these before they are guided to HslV for hydrolysis. This is ATP-dependent protease ATPase subunit HslU from Listeria welshimeri serovar 6b (strain ATCC 35897 / DSM 20650 / CCUG 15529 / CIP 8149 / NCTC 11857 / SLCC 5334 / V8).